The following is a 600-amino-acid chain: Methionine--tRNA ligase (600 aa).

Positions 12–22 match the 'HIGH' region motif; that stretch reads PYANGPRHIGH. Residues Cys144, Cys147, Cys157, and Cys160 each coordinate Zn(2+). The 'KMSKS' region motif lies at 351-355; that stretch reads KFSSS. Ser354 is a binding site for ATP.

The protein belongs to the class-I aminoacyl-tRNA synthetase family. MetG type 1 subfamily. In terms of assembly, monomer. Requires Zn(2+) as cofactor.

Its subcellular location is the cytoplasm. It carries out the reaction tRNA(Met) + L-methionine + ATP = L-methionyl-tRNA(Met) + AMP + diphosphate. In terms of biological role, is required not only for elongation of protein synthesis but also for the initiation of all mRNA translation through initiator tRNA(fMet) aminoacylation. This is Methionine--tRNA ligase from Chloroflexus aurantiacus (strain ATCC 29364 / DSM 637 / Y-400-fl).